A 203-amino-acid chain; its full sequence is Type III effector protein HopBF1 (203 aa).

Residues 1-23 (MFNVSNNVAPSRYQGPSSTSVTP) form a disordered region. Residues Ser-40, Gln-41, Lys-42, Asp-107, Ile-109, and Asp-114 each contribute to the ATP site. Residue Asp-155 is part of the active site. An ATP-binding site is contributed by Gln-157.

The protein belongs to the HopBF1 family.

Its subcellular location is the secreted. The protein localises to the host cell. It carries out the reaction L-seryl-[protein] + ATP = O-phospho-L-seryl-[protein] + ADP + H(+). Effector protein that targets and inactivates the eukaryotic molecular chaperone HSP90 during infection. HopBF1 is recognized by HSP90 as a host client. As a result, HopBF1 phosphorylates HSP90, leading to the inactivation of the HSP90 ATPase activity and chaperone function. In vitro, can phosphorylate the recombinant yeast HSP82 (HSP90) and human HSP 90-beta on Ser-108. This Ewingella americana (strain ATCC 33852 / DSM 4580 / CCUG 14506 / JCM 5911 / LMG 7869 / NCTC 12157 / CDC 1468-78) protein is Type III effector protein HopBF1.